The following is a 344-amino-acid chain: Trace amine-associated receptor 8c (344 aa).

Residues 1-36 (MTSNFSQATLQLCYENVNASCIKTPYSPGLRVLLYM) lie on the Extracellular side of the membrane. N-linked (GlcNAc...) asparagine glycosylation is found at Asn-4 and Asn-18. Intrachain disulfides connect Cys-21–Cys-185 and Cys-96–Cys-189. A helical transmembrane segment spans residues 37–57 (VFGFGAVLAVCGNLLVVISVL). Topologically, residues 58–67 (HFKQLHSPAN) are cytoplasmic. The chain crosses the membrane as a helical span at residues 68–88 (FLIASLASADFLVGISVMPFS). Over 89-102 (MVRSIESCWYFGDT) the chain is Extracellular. Residues 103 to 127 (FCSLHSCCDVAFCYSSALHLCFISV) form a helical membrane-spanning segment. Topologically, residues 128–146 (DRYIAVTDPLVYPTKFTVS) are cytoplasmic. A helical transmembrane segment spans residues 147 to 167 (VSGICISISWILPLVYSSAVF). The Extracellular portion of the chain corresponds to 168 to 196 (YTGISAMGIENLVSALNCVGGCQVVVNQD). A helical membrane pass occupies residues 197–217 (WVLISFLLFFIPTLVMIILYS). The Cytoplasmic portion of the chain corresponds to 218-260 (KIFLVAKQQAVKIETSVSGSKGESSLESHKARVAKRERKAAKT). A helical transmembrane segment spans residues 261–281 (LGVTVLAFIVSWLPYTIDTLI). Over 282–295 (DAFMGFITPAYVYE) the chain is Extracellular. A helical membrane pass occupies residues 296 to 319 (FCCWSAYYNSAMNPLIYAFFYPWF). Residues 320-344 (RKAMKLILSGKILKGHSSTTSLFSE) lie on the Cytoplasmic side of the membrane.

Belongs to the G-protein coupled receptor 1 family.

The protein resides in the cell membrane. In terms of biological role, olfactory receptor activated by trace amines, such as N-methylpiperidine and N,N-dimethylcyclohexylamine. Trace amine compounds are enriched in animal body fluids and act on trace amine-associated receptors (TAARs) to elicit both intraspecific and interspecific innate behaviors. Ligand-binding causes a conformation change that triggers signaling via G(s)-class of G alpha proteins (GNAL or GNAS). This chain is Trace amine-associated receptor 8c, found in Rattus norvegicus (Rat).